A 437-amino-acid polypeptide reads, in one-letter code: Probable N-acetylmuramidase (437 aa).

An N-terminal signal peptide occupies residues 1–57 (MPVSRVKVKNRHLKKKTKKPLAFYKPATKFAGAVLIAGTLTTTHELLLQQTSPMVQA). 3 disordered regions span residues 217–244 (SSAGNTNSGGSTTTITNNNSGTNSSSTT), 290–320 (ASSTNSGGSNNSASTTPTTSVTPAKPTSQTT), and 367–392 (AASNPSTGSGSTATNNSNSTSSNSNA). In terms of domain architecture, LysM 1 spans 243-286 (TTYTVKSGDTLWGISQRYGISVAQIQSANNLKSTIIYIGQKLVL). A compositionally biased stretch (low complexity) spans 290-317 (ASSTNSGGSNNSASTTPTTSVTPAKPTS). A LysM 2 domain is found at 319 to 362 (TTVKVKSGDTLWALSVKYKTSIAQLKSWNHLSSDTIYIGQNLIV). Residues 393–436 (SIHKVVKGDTLWGLSQKSGSPIASIKAWNHLSSDTILIGQYLRI) form the LysM 3 domain.

It belongs to the glycosyl hydrolase 73 family.

The protein localises to the secreted. The catalysed reaction is Hydrolysis of (1-&gt;4)-beta-linkages between N-acetylmuramic acid and N-acetyl-D-glucosamine residues in a peptidoglycan and between N-acetyl-D-glucosamine residues in chitodextrins.. Functionally, hydrolyzes the cell wall of L.lactis and M.lysodeikticus. Required for cell separation during growth. This is Probable N-acetylmuramidase (acmA) from Lactococcus lactis subsp. cremoris (strain MG1363).